A 354-amino-acid polypeptide reads, in one-letter code: Trans-L-3-hydroxyproline dehydratase (354 aa).

The active-site Proton acceptor is the Cys-104. Substrate-binding positions include 105-106 (GH), Asp-269, and 274-275 (GS).

The protein belongs to the proline racemase family. As to quaternary structure, homodimer.

The enzyme catalyses trans-3-hydroxy-L-proline = 1-pyrroline-2-carboxylate + H2O. In terms of biological role, catalyzes the dehydration of trans-3-hydroxy-L-proline to delta-1-pyrroline-2-carboxylate (Pyr2C). In Mus musculus (Mouse), this protein is Trans-L-3-hydroxyproline dehydratase (L3hypdh).